Here is a 726-residue protein sequence, read N- to C-terminus: Quinolinate synthase, chloroplastic (726 aa).

The transit peptide at 1-67 (MDAANLVMKS…KKPSNNSTFT (67 aa)) directs the protein to the chloroplast. The active-site Cysteine persulfide intermediate is the Cys-133. Residues His-283 and Ser-309 each coordinate iminosuccinate. Cys-363 provides a ligand contact to [4Fe-4S] cluster. Iminosuccinate is bound by residues 392–394 (YIN) and Ser-414. A [4Fe-4S] cluster-binding site is contributed by Cys-487. Iminosuccinate-binding positions include 513 to 515 (HFE) and Thr-538. Cys-643 contacts [4Fe-4S] cluster.

This sequence belongs to the quinolinate synthase family. Type 1 subfamily. In terms of assembly, homodimer. Requires [4Fe-4S] cluster as cofactor.

Its subcellular location is the plastid. It localises to the chloroplast. The enzyme catalyses iminosuccinate + dihydroxyacetone phosphate = quinolinate + phosphate + 2 H2O + H(+). The protein operates within alkaloid biosynthesis; nicotine biosynthesis. It functions in the pathway cofactor biosynthesis; NAD(+) biosynthesis; quinolinate from iminoaspartate: step 1/1. Involved in the biosynthesis of pyridine alkaloid natural products, leading mainly to the production of anabasine, anatabine, nicotine and nornicotine, effective deterrents against herbivores with antiparasitic and pesticide properties (neurotoxins); nornicotine serves as the precursor in the synthesis of the carcinogen compound N'-nitrosonornicotine (NNN). Catalyzes the condensation of iminoaspartate with dihydroxyacetone phosphate to form quinolinate. The polypeptide is Quinolinate synthase, chloroplastic (Nicotiana tabacum (Common tobacco)).